The primary structure comprises 593 residues: Copine-5 (593 aa).

Positions 2-134 constitute a C2 1 domain; that stretch reads EQPEDMASLS…SPGSRLEKPL (133 aa). Ser19 carries the phosphoserine modification. Ca(2+)-binding residues include Asp38, Asp44, Asp98, Asp100, Ser103, Lys108, and Asp110. Ser103 carries the post-translational modification Phosphoserine. The residue at position 140 (Ser140) is a Phosphoserine. One can recognise a C2 2 domain in the interval 161 to 284; that stretch reads KCGTIILSAE…ARGQSQFNIY (124 aa). Ca(2+) contacts are provided by Asp192, Asp198, Asp254, Asp256, and Asp262. The 227-residue stretch at 328–554 folds into the VWFA domain; sequence NFTVAIDFTA…DVLAEIPDQL (227 aa). The interval 562–593 is disordered; sequence GIRPRPPPAAPTHSPSQSPARTPPASPLHTHI. The span at 572 to 581 shows a compositional bias: low complexity; that stretch reads PTHSPSQSPA.

This sequence belongs to the copine family. Ca(2+) is required as a cofactor. As to expression, expressed in the brain, heart, stomach, spleen, lymph node and testis. Expressed in melanocytes.

It is found in the perikaryon. Its subcellular location is the cell projection. Probable calcium-dependent phospholipid-binding protein that may play a role in calcium-mediated intracellular processes. Plays a role in dendrite formation by melanocytes. The polypeptide is Copine-5 (Homo sapiens (Human)).